A 432-amino-acid chain; its full sequence is Trigger factor (432 aa).

The PPIase FKBP-type domain occupies 163–248 (GDIAVIDFEG…LKALNKKELP (86 aa)).

This sequence belongs to the FKBP-type PPIase family. Tig subfamily.

The protein localises to the cytoplasm. It carries out the reaction [protein]-peptidylproline (omega=180) = [protein]-peptidylproline (omega=0). Involved in protein export. Acts as a chaperone by maintaining the newly synthesized protein in an open conformation. Functions as a peptidyl-prolyl cis-trans isomerase. This Caldanaerobacter subterraneus subsp. tengcongensis (strain DSM 15242 / JCM 11007 / NBRC 100824 / MB4) (Thermoanaerobacter tengcongensis) protein is Trigger factor.